Here is a 299-residue protein sequence, read N- to C-terminus: Coenzyme PQQ synthesis protein B (299 aa).

It belongs to the PqqB family.

The protein operates within cofactor biosynthesis; pyrroloquinoline quinone biosynthesis. In terms of biological role, may be involved in the transport of PQQ or its precursor to the periplasm. The chain is Coenzyme PQQ synthesis protein B from Xanthomonas campestris pv. campestris (strain 8004).